A 351-amino-acid chain; its full sequence is Putative aryl-alcohol dehydrogenase C977.14c (351 aa).

Ser-113 is subject to Phosphoserine.

The protein belongs to the aldo/keto reductase family. Aldo/keto reductase 2 subfamily.

Its subcellular location is the cytoplasm. It is found in the nucleus. This is Putative aryl-alcohol dehydrogenase C977.14c from Schizosaccharomyces pombe (strain 972 / ATCC 24843) (Fission yeast).